The sequence spans 205 residues: Phosphoribosyl-dephospho-CoA transferase (205 aa).

Active-site residues include Asp-134 and Asp-136.

The protein belongs to the MdcG family.

It carries out the reaction apo-[malonate decarboxylase ACP] + 2'-(5''-triphospho-alpha-D-ribosyl)-3'-dephospho-CoA = holo-[malonate decarboxylase ACP] + diphosphate. Transfers 2'-(5-triphosphoribosyl)-3'-dephosphocoenzyme-A to the apo-[acyl-carrier-protein] of the malonate decarboxylase to yield holo-[acyl-carrier-protein]. This Klebsiella pneumoniae (strain 342) protein is Phosphoribosyl-dephospho-CoA transferase.